The primary structure comprises 447 residues: Chromosomal replication initiator protein DnaA (447 aa).

Residues 1–74 form a domain I, interacts with DnaA modulators region; that stretch reads MENIEELWSA…MLLEVTGSEL (74 aa). A domain II region spans residues 74–108; that stretch reads LNTKFIIPDSLEEIEEQKPMPKPKQSTDTGDSPKS. Residues 85–107 form a disordered region; sequence EEIEEQKPMPKPKQSTDTGDSPK. Residues 97-107 show a composition bias toward polar residues; the sequence is KQSTDTGDSPK. The tract at residues 109-325 is domain III, AAA+ region; sequence MLNSKYTFDT…GALIRVVAYS (217 aa). ATP contacts are provided by glycine 153, glycine 155, lysine 156, and threonine 157. The domain IV, binds dsDNA stretch occupies residues 326 to 447; that stretch reads SLVNQDIDAS…EELKEKLKSI (122 aa).

This sequence belongs to the DnaA family. In terms of assembly, oligomerizes as a right-handed, spiral filament on DNA at oriC.

It localises to the cytoplasm. Plays an essential role in the initiation and regulation of chromosomal replication. ATP-DnaA binds to the origin of replication (oriC) to initiate formation of the DNA replication initiation complex once per cell cycle. Binds the DnaA box (a 9 base pair repeat at the origin) and separates the double-stranded (ds)DNA. Forms a right-handed helical filament on oriC DNA; dsDNA binds to the exterior of the filament while single-stranded (ss)DNA is stabiized in the filament's interior. The ATP-DnaA-oriC complex binds and stabilizes one strand of the AT-rich DNA unwinding element (DUE), permitting loading of DNA polymerase. After initiation quickly degrades to an ADP-DnaA complex that is not apt for DNA replication. Binds acidic phospholipids. The sequence is that of Chromosomal replication initiator protein DnaA from Oceanobacillus iheyensis (strain DSM 14371 / CIP 107618 / JCM 11309 / KCTC 3954 / HTE831).